The chain runs to 890 residues: MSRSAALLLCLLGCHVWKAVTKTLREPGAGAQEVTLKVHISDASTHQPVADALIEIFTNQASIASGTSGTDGVAFIKFQYKLGSQLIVTASKHAYVPNSAPWKPIRLPVFSSLSLGLLPERSATLMVYEDVVQIVSGFQGARPQPRVHFQRRALRLPENTSYSDLTAFLTAASSPSEVDSFPYLRGLDGNGTGNSTRHDLTPVTAVSVHLLSSNGTPVLVDGPIYVTVPLATQSSLRHNAYVTAWRFDQKLGTWLKSGLGLVHQEGSQLTWTYIAPQLGYWVAAMSPPIPGPVVTQDITTYHTVFLLAILGGMAFILLVLLCLLLYYCRRKCMKPRQHHRKLQLPAGLESSKRDQSTSMSHINLLFSRRASEFPGPLSVTSHGRPEAPGTKELMSGVHLEMMSPGGEGDLHTPMLKLSYSTSQEFSSREELLSCKEEDKSQISFDNLTPSGTLRKDYHKSVEVFPLKARKSMEREGYESSGNDDYRGSYNTVLSQPLFEKQDREGPASTGSKLTIQEHLYPAPSSPEKEQLLDRRPTECMMSRSVDHLERPTSFPQPGQLICCSSVDQVNDSVYRKVLPALVIPAHYMKLPGDHSYVSQPLVVPADQQLEIERLQAELSNPHAGIFPHPSSQIQPQPLSSQAISQQHLQDAGTREWSPQNASMSESLSIPASLNDAALAQMNSEVQLLTEKALMELGGGKPLPHPRAWFVSLDGRSNAHVRHSYIDLQRAGRNGSNDASLDSGVDMNEPKSARKGRGDALSLQQNYPPVQEHQQKEPRAPDSTAYTQLVYLDDVEQSGSECGTTVCTPEDSALRCLLEGSSRRSGGQLPSLQEETTRRTADAPSEPAVSPHQRRSAHEEEEDDDDDDQGEDKKSPWQKREERPLMAFNIK.

A signal peptide spans 1 to 21; it reads MSRSAALLLCLLGCHVWKAVT. The Extracellular segment spans residues 22–303; the sequence is KTLREPGAGA…VTQDITTYHT (282 aa). Residues Asn-190 and Asn-194 are each glycosylated (N-linked (GlcNAc...) asparagine). A helical transmembrane segment spans residues 304-324; the sequence is VFLLAILGGMAFILLVLLCLL. The Cytoplasmic portion of the chain corresponds to 325–890; it reads LYYCRRKCMK…ERPLMAFNIK (566 aa). Phosphoserine is present on residues Ser-358, Ser-360, Ser-371, Ser-422, Ser-443, and Ser-525. Disordered stretches follow at residues 730 to 759 and 818 to 890; these read AGRN…RGDA and EGSS…FNIK. Residues 747 to 757 are compositionally biased toward basic and acidic residues; it reads NEPKSARKGRG. Residues 822–833 are compositionally biased toward polar residues; it reads RRSGGQLPSLQE. Residues Ser-849 and Ser-855 each carry the phosphoserine modification. Residues 858-869 show a composition bias toward acidic residues; it reads EEEEDDDDDDQG. A compositionally biased stretch (basic and acidic residues) spans 870-883; it reads EDKKSPWQKREERP.

It belongs to the FAM171 family. In terms of assembly, interacts with ADAM10, NSG1 and OAZ1.

Its subcellular location is the cell membrane. In terms of biological role, involved in the regulation of the cytoskeletal dynamics, plays a role in actin stress fiber formation. This Pongo abelii (Sumatran orangutan) protein is Protein FAM171A1 (FAM171A1).